Consider the following 472-residue polypeptide: UDP-N-acetylmuramate--L-alanine ligase (472 aa).

Gly122–Thr128 serves as a coordination point for ATP.

This sequence belongs to the MurCDEF family.

It localises to the cytoplasm. It catalyses the reaction UDP-N-acetyl-alpha-D-muramate + L-alanine + ATP = UDP-N-acetyl-alpha-D-muramoyl-L-alanine + ADP + phosphate + H(+). It functions in the pathway cell wall biogenesis; peptidoglycan biosynthesis. Functionally, cell wall formation. This Myxococcus xanthus (strain DK1622) protein is UDP-N-acetylmuramate--L-alanine ligase.